The primary structure comprises 591 residues: Thiamine transporter thi9 (591 aa).

A compositionally biased stretch (polar residues) spans 1–22 (MPSSQISHQDPELGQTSSGSSS). A disordered region spans residues 1 to 42 (MPSSQISHQDPELGQTSSGSSSIKEKAEPQLYAGPIDPARRP). The next 5 membrane-spanning stretches (helical) occupy residues 98-118 (LTFS…AMLV), 342-362 (IFYS…LYLF), 397-417 (VVMN…SVLA), 450-470 (ITVI…SAVA), and 545-565 (YAVV…IVIP). Position 585 is a phosphoserine (serine 585).

The protein belongs to the amino acid-polyamine-organocation (APC) superfamily.

Its subcellular location is the endoplasmic reticulum membrane. It localises to the cell membrane. Functionally, thiamine transporter involved in the cellular uptake of thiamine. Pyrithiamine, oxythiamine, amprolium, and the thiazole part of thiamine have been shown to be also substrates of thi9. This Schizosaccharomyces pombe (strain 972 / ATCC 24843) (Fission yeast) protein is Thiamine transporter thi9 (thi9).